The sequence spans 395 residues: Acetate kinase (395 aa).

N7 provides a ligand contact to Mg(2+). K14 is a binding site for ATP. R92 serves as a coordination point for substrate. The Proton donor/acceptor role is filled by D149. ATP-binding positions include 207–211, 282–284, and 329–333; these read HLGNG, DMR, and GIGEN. E382 provides a ligand contact to Mg(2+).

The protein belongs to the acetokinase family. Homodimer. Mg(2+) serves as cofactor. The cofactor is Mn(2+).

Its subcellular location is the cytoplasm. The catalysed reaction is acetate + ATP = acetyl phosphate + ADP. It participates in metabolic intermediate biosynthesis; acetyl-CoA biosynthesis; acetyl-CoA from acetate: step 1/2. Functionally, catalyzes the formation of acetyl phosphate from acetate and ATP. Can also catalyze the reverse reaction. The sequence is that of Acetate kinase from Brachyspira hyodysenteriae (strain ATCC 49526 / WA1).